We begin with the raw amino-acid sequence, 763 residues long: Xaa-Pro dipeptidyl-peptidase (763 aa).

Residues S348, D468, and H498 each act as charge relay system in the active site.

Belongs to the peptidase S15 family. Homodimer.

Its subcellular location is the cytoplasm. The catalysed reaction is Hydrolyzes Xaa-Pro-|- bonds to release unblocked, N-terminal dipeptides from substrates including Ala-Pro-|-p-nitroanilide and (sequentially) Tyr-Pro-|-Phe-Pro-|-Gly-Pro-|-Ile.. In terms of biological role, removes N-terminal dipeptides sequentially from polypeptides having unsubstituted N-termini provided that the penultimate residue is proline. In Lactococcus lactis subsp. cremoris (Streptococcus cremoris), this protein is Xaa-Pro dipeptidyl-peptidase (pepX).